A 335-amino-acid chain; its full sequence is Syntaxin-18 (335 aa).

At 1-309 the chain is on the cytoplasmic side; the sequence is MAVDITLLFR…EDIREAIKNN (309 aa). 2 stretches are compositionally biased toward basic and acidic residues: residues 168–182 and 192–208; these read KLEPEPNTKTRESTS and KDSEENPATEERPEKIL. The disordered stretch occupies residues 168–226; the sequence is KLEPEPNTKTRESTSSEKVSQSPSKDSEENPATEERPEKILAETQPELGTWGDGKGEDE. Residues 243–305 enclose the t-SNARE coiled-coil homology domain; sequence IGEMNSLFDE…KEGNEDIREA (63 aa). Residues 310–330 traverse the membrane as a helical; Anchor for type IV membrane protein segment; the sequence is AGFRVWILFFLVMCSFSLLFL. Residues 331–335 lie on the Vesicular side of the membrane; the sequence is DWYDS.

This sequence belongs to the syntaxin family. In terms of assembly, component of a SNARE complex consisting of STX18, USE1L, BNIP1/SEC20L, and SEC22B. RINT1/TIP20L and ZW10 are associated with the complex through interaction with BNIP1/SEC20L. Interacts directly with USE1L and BNIP1/SEC20L. As to expression, ubiquitous.

It localises to the endoplasmic reticulum membrane. The protein localises to the golgi apparatus membrane. Syntaxin that may be involved in targeting and fusion of Golgi-derived retrograde transport vesicles with the ER. This is Syntaxin-18 (STX18) from Homo sapiens (Human).